Reading from the N-terminus, the 354-residue chain is UDP-N-acetylglucosamine--N-acetylmuramyl-(pentapeptide) pyrophosphoryl-undecaprenol N-acetylglucosamine transferase (354 aa).

Residues Thr11–Gly13, Arg164, Ser194, and Gln289 each bind UDP-N-acetyl-alpha-D-glucosamine.

This sequence belongs to the glycosyltransferase 28 family. MurG subfamily.

Its subcellular location is the cell membrane. The catalysed reaction is di-trans,octa-cis-undecaprenyl diphospho-N-acetyl-alpha-D-muramoyl-L-alanyl-D-glutamyl-meso-2,6-diaminopimeloyl-D-alanyl-D-alanine + UDP-N-acetyl-alpha-D-glucosamine = di-trans,octa-cis-undecaprenyl diphospho-[N-acetyl-alpha-D-glucosaminyl-(1-&gt;4)]-N-acetyl-alpha-D-muramoyl-L-alanyl-D-glutamyl-meso-2,6-diaminopimeloyl-D-alanyl-D-alanine + UDP + H(+). It participates in cell wall biogenesis; peptidoglycan biosynthesis. Functionally, cell wall formation. Catalyzes the transfer of a GlcNAc subunit on undecaprenyl-pyrophosphoryl-MurNAc-pentapeptide (lipid intermediate I) to form undecaprenyl-pyrophosphoryl-MurNAc-(pentapeptide)GlcNAc (lipid intermediate II). In Clostridium botulinum (strain ATCC 19397 / Type A), this protein is UDP-N-acetylglucosamine--N-acetylmuramyl-(pentapeptide) pyrophosphoryl-undecaprenol N-acetylglucosamine transferase.